Reading from the N-terminus, the 224-residue chain is LOB domain-containing protein 15 (224 aa).

The region spanning 44–145 is the LOB domain; that stretch reads TPCAACKLLR…AELTAVRSEI (102 aa). Residues 171–224 are disordered; sequence SGGVSVIAPPPQRPTTPPQPTTAHPPSPSSCVFSQPTTRDLEYGNIESENNYFG. The span at 178–198 shows a compositional bias: pro residues; that stretch reads APPPQRPTTPPQPTTAHPPSP.

It belongs to the LOB domain-containing protein family. In terms of tissue distribution, expressed in young shoots, roots, stems, leaves and flowers.

The protein is LOB domain-containing protein 15 (LBD15) of Arabidopsis thaliana (Mouse-ear cress).